We begin with the raw amino-acid sequence, 196 residues long: DnaA initiator-associating protein DiaA (196 aa).

An SIS domain is found at 34-196 (LVQSLLNGNK…DSTLFPHQDE (163 aa)).

It belongs to the SIS family. DiaA subfamily. As to quaternary structure, homotetramer; dimer of dimers.

Required for the timely initiation of chromosomal replication via direct interactions with the DnaA initiator protein. This Serratia proteamaculans (strain 568) protein is DnaA initiator-associating protein DiaA.